The chain runs to 25 residues: Omega-conotoxin CVIB (25 aa).

Intrachain disulfides connect cysteine 1–cysteine 16, cysteine 8–cysteine 20, and cysteine 15–cysteine 25. The residue at position 25 (cysteine 25) is a Cysteine amide.

This sequence belongs to the conotoxin O1 superfamily. In terms of tissue distribution, expressed by the venom duct.

The protein localises to the secreted. Functionally, omega-conotoxins act at presynaptic membranes, they bind and block voltage-gated calcium channels (Cav). This toxin blocks N-, P- and Q-type calcium channels. It shows high activities on Cav2.1/CACNA1A (IC(50)=11 nM) and Cav2.2/CACNA1B (IC(50)=7.7 nM). In addition, it shows a higher potency when Cav2.2/CACNA1B is only expressed with the ancillary subunit CACNB3 (IC(50)=1.6 nM) than on Cav2.2/CACNA1B expressed with the ancillary subunits CACNA2D1 and CACNB3 (IC(50)=12 nM). Both the Cav2.2/CACNA1B block by this toxin and the recovery are voltage-independent. It is noteworthy that ancillary subunits beta do not modulate recovery from this toxin block, since Cav2.2/CACNA1B expressed with either the ancillary subunit CACNB2a (isoform 2a) or with CACNB3 exhibits moderate recovery. The protein is Omega-conotoxin CVIB of Conus catus (Cat cone).